Consider the following 258-residue polypeptide: Small ribosomal subunit protein uS2 (258 aa).

Belongs to the universal ribosomal protein uS2 family.

The protein is Small ribosomal subunit protein uS2 of Streptococcus suis (strain 98HAH33).